Consider the following 436-residue polypeptide: D-amino acid dehydrogenase (436 aa).

3-17 (IVVLGAGVVGVTSAY) lines the FAD pocket.

It belongs to the DadA oxidoreductase family. The cofactor is FAD.

The enzyme catalyses a D-alpha-amino acid + A + H2O = a 2-oxocarboxylate + AH2 + NH4(+). The protein operates within amino-acid degradation; D-alanine degradation; NH(3) and pyruvate from D-alanine: step 1/1. Functionally, oxidative deamination of D-amino acids. This Cereibacter sphaeroides (strain ATCC 17023 / DSM 158 / JCM 6121 / CCUG 31486 / LMG 2827 / NBRC 12203 / NCIMB 8253 / ATH 2.4.1.) (Rhodobacter sphaeroides) protein is D-amino acid dehydrogenase.